A 71-amino-acid polypeptide reads, in one-letter code: Translation initiation factor IF-1 (71 aa).

The 71-residue stretch at 1–71 (MSKDDLIQFT…LTKGRVIHRH (71 aa)) folds into the S1-like domain.

Belongs to the IF-1 family. Component of the 30S ribosomal translation pre-initiation complex which assembles on the 30S ribosome in the order IF-2 and IF-3, IF-1 and N-formylmethionyl-tRNA(fMet); mRNA recruitment can occur at any time during PIC assembly.

The protein resides in the cytoplasm. In terms of biological role, one of the essential components for the initiation of protein synthesis. Stabilizes the binding of IF-2 and IF-3 on the 30S subunit to which N-formylmethionyl-tRNA(fMet) subsequently binds. Helps modulate mRNA selection, yielding the 30S pre-initiation complex (PIC). Upon addition of the 50S ribosomal subunit IF-1, IF-2 and IF-3 are released leaving the mature 70S translation initiation complex. The chain is Translation initiation factor IF-1 from Rickettsia akari (strain Hartford).